Reading from the N-terminus, the 170-residue chain is Crossover junction endodeoxyribonuclease RuvC (170 aa).

Active-site residues include Asp11, Glu71, and Asp143. Residues Asp11, Glu71, and Asp143 each coordinate Mg(2+).

It belongs to the RuvC family. As to quaternary structure, homodimer which binds Holliday junction (HJ) DNA. The HJ becomes 2-fold symmetrical on binding to RuvC with unstacked arms; it has a different conformation from HJ DNA in complex with RuvA. In the full resolvosome a probable DNA-RuvA(4)-RuvB(12)-RuvC(2) complex forms which resolves the HJ. Mg(2+) is required as a cofactor.

It is found in the cytoplasm. It carries out the reaction Endonucleolytic cleavage at a junction such as a reciprocal single-stranded crossover between two homologous DNA duplexes (Holliday junction).. The RuvA-RuvB-RuvC complex processes Holliday junction (HJ) DNA during genetic recombination and DNA repair. Endonuclease that resolves HJ intermediates. Cleaves cruciform DNA by making single-stranded nicks across the HJ at symmetrical positions within the homologous arms, yielding a 5'-phosphate and a 3'-hydroxyl group; requires a central core of homology in the junction. The consensus cleavage sequence is 5'-(A/T)TT(C/G)-3'. Cleavage occurs on the 3'-side of the TT dinucleotide at the point of strand exchange. HJ branch migration catalyzed by RuvA-RuvB allows RuvC to scan DNA until it finds its consensus sequence, where it cleaves and resolves the cruciform DNA. The protein is Crossover junction endodeoxyribonuclease RuvC of Sinorhizobium fredii (strain NBRC 101917 / NGR234).